The sequence spans 165 residues: 6,7-dimethyl-8-ribityllumazine synthase (165 aa).

Residues Phe-24, 62–64, and 86–88 contribute to the 5-amino-6-(D-ribitylamino)uracil site; these read AFE and AVI. A (2S)-2-hydroxy-3-oxobutyl phosphate-binding site is contributed by 91–92; that stretch reads DT. His-94 serves as the catalytic Proton donor. Phe-119 provides a ligand contact to 5-amino-6-(D-ribitylamino)uracil. Arg-133 serves as a coordination point for (2S)-2-hydroxy-3-oxobutyl phosphate.

It belongs to the DMRL synthase family.

It carries out the reaction (2S)-2-hydroxy-3-oxobutyl phosphate + 5-amino-6-(D-ribitylamino)uracil = 6,7-dimethyl-8-(1-D-ribityl)lumazine + phosphate + 2 H2O + H(+). The protein operates within cofactor biosynthesis; riboflavin biosynthesis; riboflavin from 2-hydroxy-3-oxobutyl phosphate and 5-amino-6-(D-ribitylamino)uracil: step 1/2. Catalyzes the formation of 6,7-dimethyl-8-ribityllumazine by condensation of 5-amino-6-(D-ribitylamino)uracil with 3,4-dihydroxy-2-butanone 4-phosphate. This is the penultimate step in the biosynthesis of riboflavin. In Prochlorococcus marinus (strain MIT 9303), this protein is 6,7-dimethyl-8-ribityllumazine synthase.